Here is a 431-residue protein sequence, read N- to C-terminus: Aspartate--tRNA(Asp/Asn) ligase (431 aa).

L-aspartate is bound at residue Glu170. The segment at 192–195 (QLYK) is aspartate. Arg214 lines the L-aspartate pocket. Residues 214-216 (RAE), 222-224 (RHL), and Glu354 each bind ATP. 2 residues coordinate Mg(2+): Glu354 and Ser357. L-aspartate contacts are provided by Ser357 and Arg361. 402 to 405 (GLER) is an ATP binding site.

Belongs to the class-II aminoacyl-tRNA synthetase family. Type 2 subfamily. In terms of assembly, homodimer. The cofactor is Mg(2+).

The protein resides in the cytoplasm. It carries out the reaction tRNA(Asx) + L-aspartate + ATP = L-aspartyl-tRNA(Asx) + AMP + diphosphate. Functionally, aspartyl-tRNA synthetase with relaxed tRNA specificity since it is able to aspartylate not only its cognate tRNA(Asp) but also tRNA(Asn). Reaction proceeds in two steps: L-aspartate is first activated by ATP to form Asp-AMP and then transferred to the acceptor end of tRNA(Asp/Asn). This is Aspartate--tRNA(Asp/Asn) ligase from Methanopyrus kandleri (strain AV19 / DSM 6324 / JCM 9639 / NBRC 100938).